We begin with the raw amino-acid sequence, 120 residues long: uncharacterized protein (120 aa).

The protein to phage T4 y06Q.

This is an uncharacterized protein from Escherichia coli (strain K12).